Consider the following 463-residue polypeptide: Fumarate hydratase class II (463 aa).

Substrate is bound by residues 97–99 (SGT), 128–131 (HPND), 138–140 (SSN), and T186. H187 (proton donor/acceptor) is an active-site residue. S317 is an active-site residue. Substrate-binding positions include S318 and 323–325 (KVN).

It belongs to the class-II fumarase/aspartase family. Fumarase subfamily. Homotetramer.

It is found in the cytoplasm. The catalysed reaction is (S)-malate = fumarate + H2O. The protein operates within carbohydrate metabolism; tricarboxylic acid cycle; (S)-malate from fumarate: step 1/1. Involved in the TCA cycle. Catalyzes the stereospecific interconversion of fumarate to L-malate. The polypeptide is Fumarate hydratase class II (Helicobacter pylori (strain J99 / ATCC 700824) (Campylobacter pylori J99)).